We begin with the raw amino-acid sequence, 504 residues long: Activin receptor type-1 (504 aa).

The N-terminal stretch at 1-16 (MALPVLLLLLALPSRS) is a signal peptide. Over 17-119 (VQDEELKLNE…EAAGYSMETL (103 aa)) the chain is Extracellular. Residue N94 is glycosylated (N-linked (GlcNAc...) asparagine). Residues 120–140 (IIVILAPVVVLVIFSVVAVLI) form a helical membrane-spanning segment. At 141–504 (IRRIQKNHME…NSLDKLKADC (364 aa)) the chain is on the cytoplasmic side. Residues 173–202 (STLADLLDHSCTSGSGSGLPFLVQRTVARQ) enclose the GS domain. A Protein kinase domain is found at 203-497 (ITLVECVGKG…KTLTKIDNSL (295 aa)). ATP is bound by residues 209 to 217 (VGKGRYGEV) and K230. D331 functions as the Proton acceptor in the catalytic mechanism.

This sequence belongs to the protein kinase superfamily. TKL Ser/Thr protein kinase family. TGFB receptor subfamily. Mg(2+) serves as cofactor. The cofactor is Mn(2+).

It localises to the membrane. The enzyme catalyses L-threonyl-[receptor-protein] + ATP = O-phospho-L-threonyl-[receptor-protein] + ADP + H(+). It carries out the reaction L-seryl-[receptor-protein] + ATP = O-phospho-L-seryl-[receptor-protein] + ADP + H(+). Its function is as follows. On ligand binding, forms a receptor complex consisting of two type II and two type I transmembrane serine/threonine kinases. Type II receptors phosphorylate and activate type I receptors which autophosphorylate, then bind and activate SMAD transcriptional regulators. Receptor for activin. This is Activin receptor type-1 (ACVR1) from Gallus gallus (Chicken).